The chain runs to 253 residues: Sortase SrtE2 (253 aa).

Over residues 1 to 11 the composition is skewed to basic and acidic residues; it reads MAATTDTEHQE. The segment at 1–23 is disordered; it reads MAATTDTEHQEQAGTGGRGRRRP. The helical transmembrane segment at 30 to 50 threads the bilayer; that stretch reads AVSVLGELLITAGLVMGLFVV. Positions 69–89 are disordered; that stretch reads EKVRDDWAQDRVGGSGQDGPG. Cys-220 is an active-site residue.

The protein belongs to the bacterial sortase family. Class E subfamily.

The protein resides in the cell membrane. The catalysed reaction is The enzyme catalyzes a cell wall sorting reaction in which a surface protein with a sorting signal containing a LPXTG motif is cleaved between the Thr and Gly residue. The resulting threonine carboxyl end of the protein is covalently attached to a pentaglycine cross-bridge of peptidoglycan.. Transpeptidase that anchors surface proteins to the cell wall. Recognizes Leu-Ala-x-Thr-Gly and Leu-Pro-x-Thr-Gly, with a preference for the former. Unlike the S.aureus sortase it cleaves not only the Thr-Gly motif but also the Ala-X bond; an Ala-Glu bond is a better substrate than the Thr-Gly motif in vitro. Among its possible substrates are the chaplins ChpA, ChpB and ChpC; this enzyme is more important for ChpC attachment than is SrtE1. A double knockout mutant of srtE1 and srtE2 shows a developmental defect in aerial hyphae formation more dramatic than that due to chaplin deletion. The polypeptide is Sortase SrtE2 (Streptomyces coelicolor (strain ATCC BAA-471 / A3(2) / M145)).